Here is a 210-residue protein sequence, read N- to C-terminus: Large ribosomal subunit protein uL3 (210 aa).

A disordered region spans residues 125-151 (HGFGGGPRTHGQSDRLRAPGSIGAGTD).

This sequence belongs to the universal ribosomal protein uL3 family. As to quaternary structure, part of the 50S ribosomal subunit. Forms a cluster with proteins L14 and L19.

Its function is as follows. One of the primary rRNA binding proteins, it binds directly near the 3'-end of the 23S rRNA, where it nucleates assembly of the 50S subunit. The chain is Large ribosomal subunit protein uL3 from Roseiflexus sp. (strain RS-1).